Consider the following 357-residue polypeptide: GTPase Obg (357 aa).

The region spanning methionine 1–leucine 159 is the Obg domain. The region spanning alanine 160–histidine 334 is the OBG-type G domain. GTP-binding positions include glycine 166–serine 173, phenylalanine 191–histidine 195, aspartate 213–glycine 216, asparagine 284–aspartate 287, and serine 315–leucine 317. The Mg(2+) site is built by serine 173 and threonine 193.

This sequence belongs to the TRAFAC class OBG-HflX-like GTPase superfamily. OBG GTPase family. As to quaternary structure, monomer. It depends on Mg(2+) as a cofactor.

It is found in the cytoplasm. An essential GTPase which binds GTP, GDP and possibly (p)ppGpp with moderate affinity, with high nucleotide exchange rates and a fairly low GTP hydrolysis rate. Plays a role in control of the cell cycle, stress response, ribosome biogenesis and in those bacteria that undergo differentiation, in morphogenesis control. This is GTPase Obg from Acidovorax ebreus (strain TPSY) (Diaphorobacter sp. (strain TPSY)).